The sequence spans 289 residues: ATP synthase gamma chain (289 aa).

It belongs to the ATPase gamma chain family. As to quaternary structure, F-type ATPases have 2 components, CF(1) - the catalytic core - and CF(0) - the membrane proton channel. CF(1) has five subunits: alpha(3), beta(3), gamma(1), delta(1), epsilon(1). CF(0) has three main subunits: a, b and c.

It is found in the cell inner membrane. In terms of biological role, produces ATP from ADP in the presence of a proton gradient across the membrane. The gamma chain is believed to be important in regulating ATPase activity and the flow of protons through the CF(0) complex. This chain is ATP synthase gamma chain, found in Anaeromyxobacter dehalogenans (strain 2CP-C).